Consider the following 567-residue polypeptide: Glutamate--tRNA ligase (567 aa).

A 'HIGH' region motif is present at residues 106 to 116; it reads PNPDGPLHLGN.

Belongs to the class-I aminoacyl-tRNA synthetase family. Glutamate--tRNA ligase type 2 subfamily.

It is found in the cytoplasm. The enzyme catalyses tRNA(Glu) + L-glutamate + ATP = L-glutamyl-tRNA(Glu) + AMP + diphosphate. Functionally, catalyzes the attachment of glutamate to tRNA(Glu) in a two-step reaction: glutamate is first activated by ATP to form Glu-AMP and then transferred to the acceptor end of tRNA(Glu). The polypeptide is Glutamate--tRNA ligase (Sulfolobus acidocaldarius (strain ATCC 33909 / DSM 639 / JCM 8929 / NBRC 15157 / NCIMB 11770)).